The primary structure comprises 202 residues: MSRYRGPRVRIIRRLGALPGLTSKTPQLKSNSINQSASNKKISQYRIRLEEKQKLRFHYGITERQLLKYVRIARKAKGSTGQVLLQLLEMRLDNILFRLGMAPTIPGARQLVNHRHILVNDRIVNIPSYRCKPQDFITIKERQKSQGIIVKNMDLSQKYKIPNHLTFNSLEKKGLVNQILDRESIGLKINELLVVEYYSRQA.

The S4 RNA-binding domain occupies 90–165; it reads MRLDNILFRL…SQKYKIPNHL (76 aa).

This sequence belongs to the universal ribosomal protein uS4 family. Part of the 30S ribosomal subunit. Contacts protein S5. The interaction surface between S4 and S5 is involved in control of translational fidelity.

The protein resides in the plastid. It localises to the chloroplast. Functionally, one of the primary rRNA binding proteins, it binds directly to 16S rRNA where it nucleates assembly of the body of the 30S subunit. With S5 and S12 plays an important role in translational accuracy. The sequence is that of Small ribosomal subunit protein uS4c (rps4) from Diphyscium foliosum (Nut-moss).